A 407-amino-acid chain; its full sequence is Endo-1,4-beta-xylanase D (407 aa).

The signal sequence occupies residues 1–19 (MTLVKSILLALAAGHVAQA). The GH10 domain maps to 20–333 (QLNTAAKAAG…KPAYYGILAG (314 aa)). N118 is a glycosylation site (N-linked (GlcNAc...) asparagine). E148 functions as the Proton donor in the catalytic mechanism. Catalysis depends on E255, which acts as the Nucleophile. A disulfide bond links C283 and C289. The segment at 337–364 (GSGSSSSTSSTTLITTTTPTASSSTTSA) is disordered. The 37-residue stretch at 371-407 (SGAAHWGQCGGIGWSGPTICVSPYTCQVLNPYYSQCL) folds into the CBM1 domain.

The protein belongs to the glycosyl hydrolase 10 (cellulase F) family.

The protein localises to the secreted. The enzyme catalyses Endohydrolysis of (1-&gt;4)-beta-D-xylosidic linkages in xylans.. It participates in glycan degradation; xylan degradation. With respect to regulation, inhibited by wheat xylanase inhibiting protein I (XIP-I). Endo-1,4-beta-xylanase involved in the hydrolysis of xylan, a major structural heterogeneous polysaccharide found in plant biomass representing the second most abundant polysaccharide in the biosphere, after cellulose. Shows an endo-mode of action on xylan forming mainly xylobiose and short-chain xylooligosaccharides (XOS). The protein is Endo-1,4-beta-xylanase D (xynD) of Talaromyces funiculosus (Fruitlet core rot fungus).